Reading from the N-terminus, the 137-residue chain is Large ribosomal subunit protein uL16 (137 aa).

Belongs to the universal ribosomal protein uL16 family. Part of the 50S ribosomal subunit.

Binds 23S rRNA and is also seen to make contacts with the A and possibly P site tRNAs. The polypeptide is Large ribosomal subunit protein uL16 (Acinetobacter baumannii (strain SDF)).